The following is a 155-amino-acid chain: Small ribosomal subunit protein bS16 (155 aa).

The disordered stretch occupies residues alanine 113–glutamate 155. Acidic residues predominate over residues alanine 136 to alanine 146.

Belongs to the bacterial ribosomal protein bS16 family.

The protein is Small ribosomal subunit protein bS16 of Mycobacteroides abscessus (strain ATCC 19977 / DSM 44196 / CCUG 20993 / CIP 104536 / JCM 13569 / NCTC 13031 / TMC 1543 / L948) (Mycobacterium abscessus).